The chain runs to 359 residues: 4-hydroxy-2-oxovalerate aldolase 1 (359 aa).

The region spanning 23-275 (VRVTDTSLRD…KTGIDFFDIA (253 aa)) is the Pyruvate carboxyltransferase domain. 31-32 (RD) lines the substrate pocket. A Mn(2+)-binding site is contributed by Asp-32. The active-site Proton acceptor is the His-35. Substrate-binding residues include Ser-185 and His-214. Mn(2+)-binding residues include His-214 and His-216. Tyr-305 lines the substrate pocket.

The protein belongs to the 4-hydroxy-2-oxovalerate aldolase family.

The catalysed reaction is (S)-4-hydroxy-2-oxopentanoate = acetaldehyde + pyruvate. In Mycobacteroides abscessus (strain ATCC 19977 / DSM 44196 / CCUG 20993 / CIP 104536 / JCM 13569 / NCTC 13031 / TMC 1543 / L948) (Mycobacterium abscessus), this protein is 4-hydroxy-2-oxovalerate aldolase 1.